The chain runs to 470 residues: Argininosuccinate lyase (470 aa).

This sequence belongs to the lyase 1 family. Argininosuccinate lyase subfamily.

Its subcellular location is the cytoplasm. The enzyme catalyses 2-(N(omega)-L-arginino)succinate = fumarate + L-arginine. Its pathway is amino-acid biosynthesis; L-arginine biosynthesis; L-arginine from L-ornithine and carbamoyl phosphate: step 3/3. The sequence is that of Argininosuccinate lyase from Mycolicibacterium vanbaalenii (strain DSM 7251 / JCM 13017 / BCRC 16820 / KCTC 9966 / NRRL B-24157 / PYR-1) (Mycobacterium vanbaalenii).